We begin with the raw amino-acid sequence, 21 residues long: Large ribosomal subunit protein uL30 (21 aa).

The span at 1 to 15 shows a compositional bias: polar residues; that stretch reads AKTENKTVTVRQTAS. Positions 1–21 are disordered; the sequence is AKTENKTVTVRQTASPIXXXK.

It belongs to the universal ribosomal protein uL30 family. In terms of assembly, part of the 50S ribosomal subunit.

The protein is Large ribosomal subunit protein uL30 (rpmD) of Brevundimonas diminuta (Pseudomonas diminuta).